Here is a 429-residue protein sequence, read N- to C-terminus: Enolase (429 aa).

Gln163 is a (2R)-2-phosphoglycerate binding site. Catalysis depends on Glu205, which acts as the Proton donor. Mg(2+)-binding residues include Asp242, Glu287, and Asp314. The (2R)-2-phosphoglycerate site is built by Lys339, Arg368, Ser369, and Lys390. Catalysis depends on Lys339, which acts as the Proton acceptor.

Belongs to the enolase family. It depends on Mg(2+) as a cofactor.

The protein resides in the cytoplasm. The protein localises to the secreted. Its subcellular location is the cell surface. The enzyme catalyses (2R)-2-phosphoglycerate = phosphoenolpyruvate + H2O. It participates in carbohydrate degradation; glycolysis; pyruvate from D-glyceraldehyde 3-phosphate: step 4/5. In terms of biological role, catalyzes the reversible conversion of 2-phosphoglycerate (2-PG) into phosphoenolpyruvate (PEP). It is essential for the degradation of carbohydrates via glycolysis. The chain is Enolase from Salinibacter ruber (strain DSM 13855 / M31).